The primary structure comprises 705 residues: Fatty acid oxidation complex subunit alpha (705 aa).

The enoyl-CoA hydratase stretch occupies residues Met1 to Pro190. Residues Ser308–Asn705 form a 3-hydroxyacyl-CoA dehydrogenase region.

The protein in the N-terminal section; belongs to the enoyl-CoA hydratase/isomerase family. This sequence in the central section; belongs to the 3-hydroxyacyl-CoA dehydrogenase family. As to quaternary structure, heterotetramer of two alpha chains (FadJ) and two beta chains (FadI).

The protein resides in the cytoplasm. The catalysed reaction is a (3S)-3-hydroxyacyl-CoA = a (2E)-enoyl-CoA + H2O. It carries out the reaction a 4-saturated-(3S)-3-hydroxyacyl-CoA = a (3E)-enoyl-CoA + H2O. It catalyses the reaction a (3S)-3-hydroxyacyl-CoA + NAD(+) = a 3-oxoacyl-CoA + NADH + H(+). The enzyme catalyses (3S)-3-hydroxybutanoyl-CoA = (3R)-3-hydroxybutanoyl-CoA. Its pathway is lipid metabolism; fatty acid beta-oxidation. Functionally, catalyzes the formation of a hydroxyacyl-CoA by addition of water on enoyl-CoA. Also exhibits 3-hydroxyacyl-CoA epimerase and 3-hydroxyacyl-CoA dehydrogenase activities. In Vibrio vulnificus (strain CMCP6), this protein is Fatty acid oxidation complex subunit alpha.